The following is a 182-amino-acid chain: Ribosome-recycling factor (182 aa).

It belongs to the RRF family.

Its subcellular location is the cytoplasm. Functionally, responsible for the release of ribosomes from messenger RNA at the termination of protein biosynthesis. May increase the efficiency of translation by recycling ribosomes from one round of translation to another. The sequence is that of Ribosome-recycling factor from Mycoplasma capricolum subsp. capricolum (strain California kid / ATCC 27343 / NCTC 10154).